The chain runs to 221 residues: Protein LURP-one-related 17 (221 aa).

A disordered region spans residues 1–20 (MFPFLKQRSRSVHGEDAPSS).

This sequence belongs to the LOR family.

In terms of biological role, might be related to the phospholipid scramblase and tubby-like superfamily of membrane tethered transcription factors. The sequence is that of Protein LURP-one-related 17 from Arabidopsis thaliana (Mouse-ear cress).